The following is a 264-amino-acid chain: uncharacterized protein (264 aa).

8 helical membrane passes run 19-39 (LFPA…LPFL), 42-62 (YDWL…SGLE), 69-89 (VITL…HMGS), 100-120 (IFGV…YLCQ), 136-156 (FAVV…HFSI), 160-180 (WWLS…YEVN), 192-212 (FILI…FGAW), and 223-243 (LVHL…FLIV).

It localises to the cell membrane. This is an uncharacterized protein from Bacillus subtilis (strain 168).